We begin with the raw amino-acid sequence, 494 residues long: Alpha-amylase-related protein (494 aa).

A signal peptide spans 1–20; sequence MFKFTFALALCVLAAGLVLA. Glutamine 21 is subject to Pyrrolidone carboxylic acid. Cysteine 48 and cysteine 104 are joined by a disulfide. Residues asparagine 118, glutamine 169, and aspartate 178 each contribute to the Ca(2+) site. A disulfide bond links cysteine 157 and cysteine 171. Arginine 206 provides a ligand contact to chloride. Catalysis depends on aspartate 208, which acts as the Nucleophile. Histidine 212 is a binding site for Ca(2+). The active-site Proton donor is the glutamate 245. Positions 308 and 343 each coordinate chloride. Disulfide bonds link cysteine 376–cysteine 382, cysteine 418–cysteine 441, and cysteine 448–cysteine 460.

Belongs to the glycosyl hydrolase 13 family. Monomer. Ca(2+) is required as a cofactor. Requires chloride as cofactor.

It is found in the secreted. The enzyme catalyses Endohydrolysis of (1-&gt;4)-alpha-D-glucosidic linkages in polysaccharides containing three or more (1-&gt;4)-alpha-linked D-glucose units.. The chain is Alpha-amylase-related protein (Amyrel) from Drosophila pseudoobscura pseudoobscura (Fruit fly).